The chain runs to 658 residues: UvrABC system protein B (658 aa).

One can recognise a Helicase ATP-binding domain in the interval 26–413 (EGINSGKKKQ…SPEVIEQIIR (388 aa)). 39–46 (GATGTGKT) is a binding site for ATP. Residues 92–115 (YYDYYQPEAYVPQTDTFIEKDAQI) carry the Beta-hairpin motif. The region spanning 430–596 (QIDDLLGEIQ…TIQKGVRDVI (167 aa)) is the Helicase C-terminal domain. The region spanning 622-657 (EKTIAKMEAEMKEAAKALDFERAAELRDLLLELKAE) is the UVR domain.

It belongs to the UvrB family. As to quaternary structure, forms a heterotetramer with UvrA during the search for lesions. Interacts with UvrC in an incision complex.

Its subcellular location is the cytoplasm. Its function is as follows. The UvrABC repair system catalyzes the recognition and processing of DNA lesions. A damage recognition complex composed of 2 UvrA and 2 UvrB subunits scans DNA for abnormalities. Upon binding of the UvrA(2)B(2) complex to a putative damaged site, the DNA wraps around one UvrB monomer. DNA wrap is dependent on ATP binding by UvrB and probably causes local melting of the DNA helix, facilitating insertion of UvrB beta-hairpin between the DNA strands. Then UvrB probes one DNA strand for the presence of a lesion. If a lesion is found the UvrA subunits dissociate and the UvrB-DNA preincision complex is formed. This complex is subsequently bound by UvrC and the second UvrB is released. If no lesion is found, the DNA wraps around the other UvrB subunit that will check the other stand for damage. In Bacillus cereus (strain ZK / E33L), this protein is UvrABC system protein B.